Reading from the N-terminus, the 937-residue chain is FNIP repeat-containing protein DDB_G0271996 (937 aa).

The segment covering 1 to 12 (MQQPISIQQPVV) has biased composition (polar residues). The segment at 1 to 60 (MQQPISIQQPVVNNINNSPNNQANINNNTTNNTNNNNNNNNTTNNIANNNNSNNINNNNE) is disordered. Low complexity predominate over residues 13 to 60 (NNINNSPNNQANINNNTTNNTNNNNNNNNTTNNIANNNNSNNINNNNE). FNIP repeat units lie at residues 307–350 (FNQP…LGQR), 354–394 (PIPI…TLDN), 396–439 (FNQP…FHQN), and 598–640 (YNHQ…RVKS). The stretch at 677-769 (VEQQAQYAQQ…EEEDTNNHQH (93 aa)) forms a coiled coil. Residues 719 to 729 (KQQQQQQQDNE) show a composition bias toward low complexity. 3 disordered regions span residues 719 to 767 (KQQQ…TNNH), 794 to 823 (SNNSNNYNYNNNSNNNNNNNSNEEDDEEED), and 910 to 937 (QNQNNNNYNNNNNNNNNNNNNKKKNVKK). A compositionally biased stretch (acidic residues) spans 751-763 (LEEEQENEEEEED). 2 stretches are compositionally biased toward low complexity: residues 794-814 (SNNSNNYNYNNNSNNNNNNNS) and 910-929 (QNQNNNNYNNNNNNNNNNNN). Positions 902 to 937 (ICNNINQNQNQNNNNYNNNNNNNNNNNNNKKKNVKK) form a coiled coil.

This Dictyostelium discoideum (Social amoeba) protein is FNIP repeat-containing protein DDB_G0271996.